The sequence spans 129 residues: Small ribosomal subunit protein eS6 (129 aa).

Positions threonine 53–aspartate 88 are disordered.

This sequence belongs to the eukaryotic ribosomal protein eS6 family.

In Haloarcula marismortui (strain ATCC 43049 / DSM 3752 / JCM 8966 / VKM B-1809) (Halobacterium marismortui), this protein is Small ribosomal subunit protein eS6 (rps6e).